The sequence spans 153 residues: Putative nuclear shuttle protein (153 aa).

The protein belongs to the nanoviridae nuclear shuttle protein family.

The protein localises to the host nucleus. It is found in the host cytoplasm. Functionally, putative nuclear shuttle protein. The protein is Putative nuclear shuttle protein (DNA-N) of Astragalus sinicus (Chinese milk vetch).